Reading from the N-terminus, the 339-residue chain is D-erythrose-4-phosphate dehydrogenase (339 aa).

Residues 12–13 (RI) and R81 each bind NAD(+). Substrate-binding positions include 154 to 156 (SCT), R200, 213 to 214 (TK), and R236. Residue C155 is the Nucleophile of the active site. N318 serves as a coordination point for NAD(+).

This sequence belongs to the glyceraldehyde-3-phosphate dehydrogenase family. Epd subfamily. As to quaternary structure, homotetramer.

It localises to the cytoplasm. It carries out the reaction D-erythrose 4-phosphate + NAD(+) + H2O = 4-phospho-D-erythronate + NADH + 2 H(+). The protein operates within cofactor biosynthesis; pyridoxine 5'-phosphate biosynthesis; pyridoxine 5'-phosphate from D-erythrose 4-phosphate: step 1/5. Functionally, catalyzes the NAD-dependent conversion of D-erythrose 4-phosphate to 4-phosphoerythronate. This chain is D-erythrose-4-phosphate dehydrogenase, found in Shigella dysenteriae serotype 1 (strain Sd197).